The sequence spans 232 residues: Endonuclease NucS (232 aa).

Belongs to the NucS endonuclease family.

The protein resides in the cytoplasm. In terms of biological role, cleaves both 3' and 5' ssDNA extremities of branched DNA structures. This chain is Endonuclease NucS, found in Mycobacteroides abscessus (strain ATCC 19977 / DSM 44196 / CCUG 20993 / CIP 104536 / JCM 13569 / NCTC 13031 / TMC 1543 / L948) (Mycobacterium abscessus).